The chain runs to 231 residues: LexA repressor (231 aa).

A disordered region spans residues 1–24 (MTDRKEHKMKPGRRPTEGMTPSQE). The H-T-H motif DNA-binding region spans 43 to 62 (VKEIAEALGMKTPSAHEQVQ). Catalysis depends on for autocatalytic cleavage activity residues serine 146 and lysine 183.

The protein belongs to the peptidase S24 family. As to quaternary structure, homodimer.

The enzyme catalyses Hydrolysis of Ala-|-Gly bond in repressor LexA.. In terms of biological role, represses a number of genes involved in the response to DNA damage (SOS response), including recA and lexA. In the presence of single-stranded DNA, RecA interacts with LexA causing an autocatalytic cleavage which disrupts the DNA-binding part of LexA, leading to derepression of the SOS regulon and eventually DNA repair. The chain is LexA repressor from Magnetococcus marinus (strain ATCC BAA-1437 / JCM 17883 / MC-1).